The primary structure comprises 483 residues: Linamarin synthase 1 (483 aa).

Residue histidine 22 is the Proton acceptor of the active site. Residue histidine 22 participates in an anthocyanidin binding. Aspartate 124 functions as the Charge relay in the catalytic mechanism. Positions 146, 360, 362, 377, 380, 381, 382, and 385 each coordinate UDP-alpha-D-glucose. Residue alanine 400 coordinates an anthocyanidin. Residues glutamate 401 and glutamine 402 each coordinate UDP-alpha-D-glucose.

This sequence belongs to the UDP-glycosyltransferase family. As to expression, expressed in the cortex, xylem and phloem parenchyma, and in specific cells in the endodermis of the petiole of the first unfolded leaf.

It catalyses the reaction 2-hydroxy-2-methylpropanenitrile + UDP-alpha-D-glucose = linamarin + UDP + H(+). In terms of biological role, UDP-glucosyltransferase catalyzing in planta synthesis of cyanogenic glucosides. Able to glucosylate acetone cyanohydrin and 2-hydroxy-2-methylbutyronitrile, forming linamarin and lotaustralin. Also accepts, to some extent, a wide range of potential acceptor substrates, including simple alcohols, flavonoids, isoflavonoids and other hydroxynitriles such as p-hydroxymandelonitrile, mandelonitrile, (E)-4-hydroxy-2-methylbut-2-enenitrile and (E)- 2-(hydroxymethyl)but-2-enenitrile. This is Linamarin synthase 1 from Manihot esculenta (Cassava).